The primary structure comprises 190 residues: CASP-like protein 1E1 (190 aa).

The segment at 1–21 (MEHESKTKMDGIEMEKGKKEN) is disordered. The Cytoplasmic segment spans residues 1–28 (MEHESKTKMDGIEMEKGKKENGSRKGVE). Residues 29–49 (ITMRVLALVLTMVAATVLGVA) form a helical membrane-spanning segment. Residues 50–83 (KQTEVVPIKLIPTLPPLNVATTAKASYLSAFVYN) lie on the Extracellular side of the membrane. The chain crosses the membrane as a helical span at residues 84–104 (ICANAIACGYTAISIMIVIIS). At 105-111 (KGRRSKC) the chain is on the cytoplasmic side. The helical transmembrane segment at 112–132 (LLMAVLIGDLMMVALLCSSTG) threads the bilayer. At 133 to 163 (AAGAIGLMGRHGNKHVMWKKVCGVFGKFCNQ) the chain is on the extracellular side. A helical transmembrane segment spans residues 164-184 (AAVSVAITLIASVVFMLLVVL). The Cytoplasmic segment spans residues 185–190 (DALKLP).

Belongs to the Casparian strip membrane proteins (CASP) family. As to quaternary structure, homodimer and heterodimers.

The protein localises to the cell membrane. The chain is CASP-like protein 1E1 from Arabidopsis lyrata subsp. lyrata (Lyre-leaved rock-cress).